The sequence spans 232 residues: Putative N-acetylmannosamine-6-phosphate 2-epimerase (232 aa).

This sequence belongs to the NanE family.

It carries out the reaction an N-acyl-D-glucosamine 6-phosphate = an N-acyl-D-mannosamine 6-phosphate. It participates in amino-sugar metabolism; N-acetylneuraminate degradation; D-fructose 6-phosphate from N-acetylneuraminate: step 3/5. Its function is as follows. Converts N-acetylmannosamine-6-phosphate (ManNAc-6-P) to N-acetylglucosamine-6-phosphate (GlcNAc-6-P). This chain is Putative N-acetylmannosamine-6-phosphate 2-epimerase, found in Corynebacterium glutamicum (strain R).